Reading from the N-terminus, the 323-residue chain is MFTTVRPEQKPINPFIPYDLFTAIDELKRELNAVILAHYYQDPDIQDIADYIGDSLGLSQQAAATSADVIVFAGVHFMAETAKILNPDKLVLLPDLNAGCSLADSCPPQEFAQFKAKYPDHLVVSYINCSAEIKAMSDIICTSSNAVKIVNQIPEDQPIIFAPDRNLGRYVMEQTGRDLVLWQGSCIVHETFSEKKIIQLLMEYPKAEFIAHPECEPSVLRHASYIGSTTALLTYSQKSGSDTFIVATEPGIIHQMQKEAPNKRFIPAPAMNNCLCNECPHMRLNTLEKLYLAMKNKSPEITLPEHIRVAALLPIERMLEMSK.

Residues histidine 38 and serine 55 each coordinate iminosuccinate. Position 100 (cysteine 100) interacts with [4Fe-4S] cluster. Iminosuccinate contacts are provided by residues tyrosine 126–asparagine 128 and serine 143. Cysteine 186 serves as a coordination point for [4Fe-4S] cluster. Iminosuccinate is bound by residues histidine 212–glutamate 214 and threonine 229. Residue cysteine 279 participates in [4Fe-4S] cluster binding.

This sequence belongs to the quinolinate synthase family. Type 2 subfamily. [4Fe-4S] cluster is required as a cofactor.

It localises to the cytoplasm. It catalyses the reaction iminosuccinate + dihydroxyacetone phosphate = quinolinate + phosphate + 2 H2O + H(+). The protein operates within cofactor biosynthesis; NAD(+) biosynthesis; quinolinate from iminoaspartate: step 1/1. Functionally, catalyzes the condensation of iminoaspartate with dihydroxyacetone phosphate to form quinolinate. The sequence is that of Quinolinate synthase from Gloeothece citriformis (strain PCC 7424) (Cyanothece sp. (strain PCC 7424)).